Reading from the N-terminus, the 218-residue chain is Albicidin resistance protein (218 aa).

Its subcellular location is the periplasm. Functionally, albicidin resistance protein binds to form a complex without antibiotic activity but without catalyzing any further chemical modifications to albicidin. The protein is Albicidin resistance protein of Klebsiella oxytoca.